A 202-amino-acid polypeptide reads, in one-letter code: Venom allergen 5 (202 aa).

Disulfide bonds link Cys4–Cys16, Cys8–Cys101, Cys26–Cys94, and Cys168–Cys185. Residues 46–187 (KQHNEFRQKV…WHRHYLVCNY (142 aa)) enclose the SCP domain.

This sequence belongs to the CRISP family. Venom allergen 5-like subfamily. In terms of tissue distribution, expressed by the venom gland.

Its subcellular location is the secreted. The sequence is that of Venom allergen 5 from Vespa mandarinia (Asian giant hornet).